Here is a 327-residue protein sequence, read N- to C-terminus: Malate dehydrogenase 1 (327 aa).

NAD(+) is bound at residue 12–18 (GAAGQIA). Substrate contacts are provided by Arg-93 and Arg-99. NAD(+) is bound by residues Asn-106, Gln-113, and 130–132 (VGN). Substrate contacts are provided by Asn-132 and Arg-163. The Proton acceptor role is filled by His-188.

Belongs to the LDH/MDH superfamily. MDH type 2 family.

The enzyme catalyses (S)-malate + NAD(+) = oxaloacetate + NADH + H(+). Catalyzes the reversible oxidation of malate to oxaloacetate. The sequence is that of Malate dehydrogenase 1 from Burkholderia thailandensis (strain ATCC 700388 / DSM 13276 / CCUG 48851 / CIP 106301 / E264).